The following is a 271-amino-acid chain: Phosphonoacetaldehyde hydrolase (271 aa).

Asp12 functions as the Nucleophile in the catalytic mechanism. Asp12 and Ala14 together coordinate Mg(2+). Catalysis depends on Lys54, which acts as the Schiff-base intermediate with substrate. A Mg(2+)-binding site is contributed by Asp188.

The protein belongs to the HAD-like hydrolase superfamily. PhnX family. As to quaternary structure, homodimer. The cofactor is Mg(2+).

The catalysed reaction is phosphonoacetaldehyde + H2O = acetaldehyde + phosphate + H(+). Its function is as follows. Involved in phosphonate degradation. The sequence is that of Phosphonoacetaldehyde hydrolase from Vibrio campbellii (strain ATCC BAA-1116).